The following is a 229-amino-acid chain: Large ribosomal subunit protein uL1 (229 aa).

Belongs to the universal ribosomal protein uL1 family. In terms of assembly, part of the 50S ribosomal subunit.

Its function is as follows. Binds directly to 23S rRNA. The L1 stalk is quite mobile in the ribosome, and is involved in E site tRNA release. Protein L1 is also a translational repressor protein, it controls the translation of the L11 operon by binding to its mRNA. In Pelagibacter ubique (strain HTCC1062), this protein is Large ribosomal subunit protein uL1.